We begin with the raw amino-acid sequence, 580 residues long: DNA mismatch repair protein MutL (580 aa).

Belongs to the DNA mismatch repair MutL/HexB family.

Functionally, this protein is involved in the repair of mismatches in DNA. It is required for dam-dependent methyl-directed DNA mismatch repair. May act as a 'molecular matchmaker', a protein that promotes the formation of a stable complex between two or more DNA-binding proteins in an ATP-dependent manner without itself being part of a final effector complex. This is DNA mismatch repair protein MutL from Chlamydia caviae (strain ATCC VR-813 / DSM 19441 / 03DC25 / GPIC) (Chlamydophila caviae).